The following is a 111-amino-acid chain: MASCCIFCAQFVLNRNLLEANKYKLSEITFKVYISIRRLLIVVITLYRRIVECCASLCSLIFSKYYLHYKTFRILTIIQSWSDKVSVLPNRLYCLPFCNAFIEFVKKLTET.

It localises to the cytoplasm. The protein localises to the nucleus. This is an uncharacterized protein from Schizosaccharomyces pombe (strain 972 / ATCC 24843) (Fission yeast).